We begin with the raw amino-acid sequence, 608 residues long: Glutamine--fructose-6-phosphate aminotransferase [isomerizing] (608 aa).

Catalysis depends on C2, which acts as the Nucleophile; for GATase activity. Residues 2–217 enclose the Glutamine amidotransferase type-2 domain; that stretch reads CGIVGILGRE…DGDWVVLTRN (216 aa). SIS domains lie at 284–423 and 456–598; these read LPFD…ARGE and LARE…VDQP. K603 serves as the catalytic For Fru-6P isomerization activity.

In terms of assembly, homodimer.

Its subcellular location is the cytoplasm. The enzyme catalyses D-fructose 6-phosphate + L-glutamine = D-glucosamine 6-phosphate + L-glutamate. Catalyzes the first step in hexosamine metabolism, converting fructose-6P into glucosamine-6P using glutamine as a nitrogen source. The chain is Glutamine--fructose-6-phosphate aminotransferase [isomerizing] (glmS) from Bradyrhizobium diazoefficiens (strain JCM 10833 / BCRC 13528 / IAM 13628 / NBRC 14792 / USDA 110).